The following is a 256-amino-acid chain: N-acetyl-D-glucosamine kinase (256 aa).

Residues 4–11 (GFDMGGTK) and 133–140 (GVGGGLIV) each bind ATP. Residues histidine 157, cysteine 177, cysteine 179, and cysteine 184 each coordinate Zn(2+).

This sequence belongs to the ROK (NagC/XylR) family. NagK subfamily.

It carries out the reaction N-acetyl-D-glucosamine + ATP = N-acetyl-D-glucosamine 6-phosphate + ADP + H(+). It participates in cell wall biogenesis; peptidoglycan recycling. Its function is as follows. Catalyzes the phosphorylation of N-acetyl-D-glucosamine (GlcNAc) derived from cell-wall degradation, yielding GlcNAc-6-P. This is N-acetyl-D-glucosamine kinase (nagK) from Yersinia pestis bv. Antiqua (strain Nepal516).